The sequence spans 219 residues: Elongation factor Ts (219 aa).

The segment at 82 to 85 (TDFV) is involved in Mg(2+) ion dislocation from EF-Tu.

Belongs to the EF-Ts family.

It is found in the cytoplasm. Associates with the EF-Tu.GDP complex and induces the exchange of GDP to GTP. It remains bound to the aminoacyl-tRNA.EF-Tu.GTP complex up to the GTP hydrolysis stage on the ribosome. This is Elongation factor Ts from Gloeobacter violaceus (strain ATCC 29082 / PCC 7421).